We begin with the raw amino-acid sequence, 635 residues long: Two-component response regulator ARR18 (635 aa).

The Response regulatory domain maps to 19–133 (RVLAVDDNPT…ELQNIWHHVV (115 aa)). Position 70 is a 4-aspartylphosphate (Asp-70). Disordered regions lie at residues 144 to 196 (LPPS…KKPR) and 323 to 342 (IQQGHHQNSSNSANPFGTYH). Positions 166–186 (SGDEDDSDREEDDGEGSEQDG) are enriched in acidic residues. Positions 193 to 196 (KKPR) match the Nuclear localization signal motif. A DNA-binding region (myb-like GARP) is located at residues 196–246 (RVVWSQELHQKFVSAVQQLGLDKAVPKKILDLMSIEGLTRENVASHLQKYR).

The protein belongs to the ARR family. Type-B subfamily. Binds the target DNA as a monomer. Post-translationally, two-component system major event consists of a His-to-Asp phosphorelay between a sensor histidine kinase (HK) and a response regulator (RR). In plants, the His-to-Asp phosphorelay involves an additional intermediate named Histidine-containing phosphotransfer protein (HPt). This multistep phosphorelay consists of a His-Asp-His-Asp sequential transfer of a phosphate group between first a His and an Asp of the HK protein, followed by the transfer to a conserved His of the HPt protein and finally the transfer to an Asp in the receiver domain of the RR protein. Predominantly expressed in young leaf tissue developing anthers, and siliques.

Its subcellular location is the nucleus. In terms of biological role, transcriptional activator that binds specifically to the DNA sequence 5'-[AG]GATT-3'. Functions as a response regulator involved in His-to-Asp phosphorelay signal transduction system. Phosphorylation of the Asp residue in the receiver domain activates the ability of the protein to promote the transcription of target genes. Could directly activate some type-A response regulators in response to cytokinins. This is Two-component response regulator ARR18 (ARR18) from Arabidopsis thaliana (Mouse-ear cress).